The sequence spans 214 residues: Small ribosomal subunit protein uS5 (214 aa).

Positions 54 to 117 constitute an S5 DRBM domain; the sequence is LKYEVVDIKV…RDAKMNIIPV (64 aa).

It belongs to the universal ribosomal protein uS5 family. As to quaternary structure, part of the 30S ribosomal subunit. Contacts protein S4.

In terms of biological role, with S4 and S12 plays an important role in translational accuracy. The polypeptide is Small ribosomal subunit protein uS5 (Saccharolobus solfataricus (strain ATCC 35092 / DSM 1617 / JCM 11322 / P2) (Sulfolobus solfataricus)).